The following is a 2513-amino-acid chain: Polyprotein P1234 (2513 aa).

One can recognise an Alphavirus-like MT domain in the interval 28–259 (EPKQVTPNDH…ESRKLLQSWH (232 aa)). Residues 244-263 (GSTLYPESRKLLQSWHLPSV) form a nsP1 membrane-binding region. S-palmitoyl cysteine; by host attachment occurs at residues Cys417 and Cys419. The (+)RNA virus helicase ATP-binding domain occupies 690-842 (DLTSPPYHEF…HNICTQVYHK (153 aa)). Position 721–728 (721–728 (GVPGSGKS)) interacts with a ribonucleoside 5'-triphosphate. The 149-residue stretch at 843–991 (SISRRCTLPV…IKEWEAEHAS (149 aa)) folds into the (+)RNA virus helicase C-terminal domain. Residues 1004-1327 (DTFQNKANVC…NQLNAVYAGL (324 aa)) form the Peptidase C9 domain. A nucleolus localization signal region spans residues 1005-1024 (TFQNKANVCWAKCLVPILDT). Cys1013 functions as the For cysteine protease nsP2 activity in the catalytic mechanism. The Nuclear export signal motif lies at 1058-1067 (TRIYGVDLDS). Residue His1083 is the For cysteine protease nsP2 activity of the active site. The Nuclear localization signal signature appears at 1182-1186 (PTKRV). The ADP-D-ribose site is built by Asp1343, Asn1357, Gly1365, Gly1445, Val1446, and Tyr1447. Zn(2+)-binding residues include Cys1595, Cys1597, Cys1620, and Cys1638. 2 consecutive short sequence motifs (FGDF; binding to host G3BP1) follow at residues 1851–1854 (FGDF) and 1869–1872 (FGDF). Residues 2267–2382 (DAVLETDIAS…HGVVSDALMA (116 aa)) form the RdRp catalytic domain.

As to quaternary structure, interacts with non-structural protein 3. Interacts with RNA-directed RNA polymerase nsP4. Interacts with protease nsP2. interacts with itself. In terms of assembly, interacts with mRNA-capping enzyme nsP1. Interacts with host DDX1. Interacts with host DDX3. Interacts (via C-terminus) with host G3BP1; this interaction inhibits the formation of host stress granules on viral mRNAs and the nsp3-G3BP1 complexes bind viral RNAs and probably orchestrate the assembly of viral replication complexes. Interacts (via C-terminus) with host G3BP2; this interaction inhibits the formation of host stress granules on viral mRNAs and the nsp3-G3BP2 complexes bind viral RNAs and probably orchestrate the assembly of viral replication complexes. Interacts with mRNA-capping enzyme nsP1. Interacts with protease nsP2. interacts with itself. As to quaternary structure, interacts with RNA-directed RNA polymerase nsP4. Interacts with mRNA-capping enzyme nsP1. Interacts with KPNA1/karyopherin-alpha1; this interaction probably allows the active transport of protease nsP2 into the host nucleus. The cofactor is Mg(2+). It depends on Mn(2+) as a cofactor. In terms of processing, specific enzymatic cleavages in vivo yield mature proteins. The processing of the polyprotein is temporally regulated. In early stages (1.7 hpi), P1234 is first cleaved in trans through its nsP2 protease activity, releasing P123' and nsP4, which associate to form the early replication complex. At the same time, P1234 is also cut at the nsP1/nsP2 site early in infection but with lower efficiency. After replication of the viral minus-strand RNAs (4 hpi), the polyproteins are cut at the nsP1/nsP2 and nsP2/nsP3 sites very efficiently, preventing accumulation of P123' and P1234 and allowing the formation of the late replication complex. NsP3'/nsP4 site is not cleaved anymore and P34 is produced rather than nsP4. Post-translationally, specific enzymatic cleavages in vivo yield mature proteins. The processing of the polyprotein is temporally regulated. In early stages (1.7 hpi), P123 is cleaved at the nsP1/nsP2 site with low efficiency. After replication of the viral minus-strand RNAs (4 hpi), the polyproteins are cut at the nsP1/nsP2 and nsP2/nsP3 sites very efficiently, preventing accumulation of P123 and allowing the formation of the late replication complex. Specific enzymatic cleavages in vivo yield mature proteins. The processing of the polyprotein is temporally regulated. In early stages (1.7 hpi), P123 is cleaved at the nsP1/nsP2 site with low efficiency. After replication of the viral minus-strand RNAs (4 hpi), the polyproteins are cut at the nsP1/nsP2 and nsP2/nsP3 sites very efficiently, preventing accumulation of P123' and allowing the formation of the late replication complex. In terms of processing, palmitoylated by host palmitoyltransferases ZDHHC2 and ZDHHC19. Post-translationally, phosphorylated by host on serines and threonines. Ubiquitinated; targets the protein for rapid degradation via the ubiquitin system. Nsp4 is present in extremely low quantities due to low frequency of translation through the amber stop-codon and the degradation by the ubiquitin pathway.

The protein localises to the host cytoplasmic vesicle membrane. Its subcellular location is the host cell membrane. It localises to the host cell projection. The protein resides in the host filopodium. It is found in the host nucleus. The protein localises to the host cytoplasm. The catalysed reaction is GTP + S-adenosyl-L-methionine = N(7)-methyl-GTP + S-adenosyl-L-homocysteine. It catalyses the reaction N(7)-methyl-GTP + L-histidyl-[protein] = N(tele)-(N(7)-methylguanosine 5'-phospho)-L-histidyl-[protein] + diphosphate. The enzyme catalyses N(tele)-(N(7)-methylguanosine 5'-phospho)-L-histidyl-[protein] + a 5'-end diphospho-(purine-ribonucleoside) in mRNA + H(+) = a 5'-end (N(7)-methyl 5'-triphosphoguanosine)-(purine-ribonucleoside) in mRNA + L-histidyl-[protein]. It carries out the reaction a 5'-end triphospho-ribonucleoside in mRNA + H2O = a 5'-end diphospho-ribonucleoside in mRNA + phosphate + H(+). The catalysed reaction is a ribonucleoside 5'-triphosphate + H2O = a ribonucleoside 5'-diphosphate + phosphate + H(+). It catalyses the reaction ATP + H2O = ADP + phosphate + H(+). The enzyme catalyses RNA(n) + a ribonucleoside 5'-triphosphate = RNA(n+1) + diphosphate. It carries out the reaction 4-O-(ADP-D-ribosyl)-L-aspartyl-[protein] + H2O = L-aspartyl-[protein] + ADP-D-ribose + H(+). The catalysed reaction is 5-O-(ADP-D-ribosyl)-L-glutamyl-[protein] + H2O = L-glutamyl-[protein] + ADP-D-ribose + H(+). It catalyses the reaction RNA(n) + ATP = RNA(n)-3'-adenine ribonucleotide + diphosphate. The enzyme catalyses ADP-alpha-D-ribose 1''-phosphate + H2O = ADP-D-ribose + phosphate. Inactive precursor of the viral replicase, which is activated by cleavages carried out by the viral protease nsP2. In terms of biological role, the early replication complex formed by the polyprotein P123' and nsP4 synthesizes minus-strand RNAs. Polyprotein P123' is a short-lived polyprotein that accumulates during early stage of infection. As soon P123' is cleaved into mature proteins, the plus-strand RNAs synthesis begins. Its function is as follows. The early replication complex formed by the polyprotein P123 and nsP4 synthesizes minus-strand RNAs. As soon P123 is cleaved into mature proteins, the plus-strand RNAs synthesis begins. Functionally, cytoplasmic capping enzyme that catalyzes two virus-specific reactions: methyltransferase and nsP1 guanylyltransferase. mRNA-capping is necessary since all viral RNAs are synthesized in the cytoplasm, and host capping enzymes are restricted to the nucleus. The enzymatic reaction involves a covalent link between 7-methyl-GMP and nsP1, whereas eukaryotic capping enzymes form a covalent complex only with GMP. nsP1 capping consists in the following reactions: GTP is first methylated into 7-methyl-GMP and then is covalently linked to nsP1 to form the m7GMp-nsP1 complex from which 7-methyl-GMP complex is transferred to the mRNA to create the cap structure. NsP1 is also needed for the initiation of the minus-strand RNAs synthesis. Probably serves as a membrane anchor for the replication complex composed of nsP1-nsP4. Palmitoylated nsP1 is remodeling host cell cytoskeleton, and induces filopodium-like structure formation at the surface of the host cell. Multifunctional protein whose N-terminus is part of the RNA polymerase complex and displays NTPase, RNA triphosphatase and helicase activities. NTPase and RNA triphosphatase are involved in viral RNA capping and helicase keeps a check on the dsRNA replication intermediates. The C-terminus harbors a protease that specifically cleaves the polyproteins and releases the mature proteins. Required for the shutoff of minus-strand RNAs synthesis. Specifically inhibits the host IFN response by promoting the nuclear export of host STAT1. Also inhibits host transcription by inducing the rapid proteasome-dependent degradation of POLR2A, a catalytic subunit of the RNAPII complex. The resulting inhibition of cellular protein synthesis serves to ensure maximal viral gene expression and to evade host immune response. In terms of biological role, seems to be essential for minus-strand RNAs and subgenomic 26S mRNAs synthesis. Displays mono-ADP-ribosylhydrolase activity. ADP-ribosylation is a post-translational modification that controls various processes of the host cell and the virus probably needs to revert it for optimal viral replication. Binds proteins of FXR family and sequesters them into the viral RNA replication complexes thereby inhibiting the formation of host stress granules on viral mRNAs. The nsp3'-FXR complexes bind viral RNAs and probably orchestrate the assembly of viral replication complexes, thanks to the ability of FXR family members to self-assemble and bind DNA. Its function is as follows. Seems to be essential for minus-strand RNAs and subgenomic 26S mRNAs synthesis. Displays mono-ADP-ribosylhydrolase activity. ADP-ribosylation is a post-translational modification that controls various processes of the host cell and the virus probably needs to revert it for optimal viral replication. Binds proteins of G3BP family and sequesters them into the viral RNA replication complexes thereby inhibiting the formation of host stress granules on viral mRNAs. The nsp3-G3BP complexes bind viral RNAs and probably orchestrate the assembly of viral replication complexes, thanks to the ability of G3BP family members to self-assemble and bind DNA. Functionally, RNA dependent RNA polymerase. Replicates genomic and antigenomic RNA by recognizing replications specific signals. The early replication complex formed by the polyprotein P123 and nsP4 synthesizes minus-strand RNAs. The late replication complex composed of fully processed nsP1-nsP4 is responsible for the production of genomic and subgenomic plus-strand RNAs. This is Polyprotein P1234 from Anopheles (Human).